Here is a 204-residue protein sequence, read N- to C-terminus: UPF0215 protein MTH_1316 (204 aa).

The protein belongs to the UPF0215 family.

The chain is UPF0215 protein MTH_1316 from Methanothermobacter thermautotrophicus (strain ATCC 29096 / DSM 1053 / JCM 10044 / NBRC 100330 / Delta H) (Methanobacterium thermoautotrophicum).